The sequence spans 553 residues: Glutamate--tRNA ligase (553 aa).

The 'HIGH' region signature appears at 41–51; the sequence is PSPTGFQHIGG. A 'KMSKS' region motif is present at residues 293–297; that stretch reads KLSKR. Position 296 (lysine 296) interacts with ATP.

It belongs to the class-I aminoacyl-tRNA synthetase family. Glutamate--tRNA ligase type 1 subfamily. As to quaternary structure, monomer.

Its subcellular location is the cytoplasm. The enzyme catalyses tRNA(Glu) + L-glutamate + ATP = L-glutamyl-tRNA(Glu) + AMP + diphosphate. In terms of biological role, catalyzes the attachment of glutamate to tRNA(Glu) in a two-step reaction: glutamate is first activated by ATP to form Glu-AMP and then transferred to the acceptor end of tRNA(Glu). The chain is Glutamate--tRNA ligase from Clostridium beijerinckii (strain ATCC 51743 / NCIMB 8052) (Clostridium acetobutylicum).